The following is a 504-amino-acid chain: Histidine--tRNA ligase (504 aa).

Belongs to the class-II aminoacyl-tRNA synthetase family. In terms of assembly, homodimer.

Its subcellular location is the cytoplasm. The catalysed reaction is tRNA(His) + L-histidine + ATP = L-histidyl-tRNA(His) + AMP + diphosphate + H(+). This chain is Histidine--tRNA ligase (hisS), found in Rhizobium meliloti (strain 1021) (Ensifer meliloti).